Consider the following 247-residue polypeptide: Cell division protein ZapD (247 aa).

This sequence belongs to the ZapD family. As to quaternary structure, interacts with FtsZ.

It localises to the cytoplasm. Functionally, cell division factor that enhances FtsZ-ring assembly. Directly interacts with FtsZ and promotes bundling of FtsZ protofilaments, with a reduction in FtsZ GTPase activity. This Shigella boydii serotype 4 (strain Sb227) protein is Cell division protein ZapD.